A 356-amino-acid chain; its full sequence is Syntaxin-7A (356 aa).

The Cytoplasmic segment spans residues 1–333 (MYNNNNNFGG…NQKSSRNKMC (333 aa)). Low complexity-rich tracts occupy residues 32–74 (NNNN…FDNN) and 207–224 (NNNSNNNNQNNHFLNNQQ). Disordered regions lie at residues 32 to 88 (NNNN…NSDY) and 187 to 247 (EKTT…RRQQ). Residues 233-244 (EDEHQSLMESSR) are compositionally biased toward basic and acidic residues. One can recognise a t-SNARE coiled-coil homology domain in the interval 259–321 (NSIIQERDEG…KEGVNHLREA (63 aa)). Residues 334–354 (WIVLILLIVCAVLGVILFFTL) form a helical; Anchor for type IV membrane protein membrane-spanning segment. Residues 355–356 (RK) lie on the Vesicular side of the membrane.

This sequence belongs to the syntaxin family. Component of the SNARE complex composed of syn7A, syn8A, vamp7A and vti1A. Interacts with nsfA, snpA and snpC.

It is found in the endosome membrane. In terms of biological role, involved in the targeting and/or fusion of transport vesicles to their target membrane during transport of proteins from the early endosome to the lysosome. Required for fusion of late endosomes with lysosomes and homotypic lysosomal fusion. May be involved in protein trafficking from the plasma membrane to the early endosome (EE) as well as in homotypic fusion of endocytic organelles. In Dictyostelium discoideum (Social amoeba), this protein is Syntaxin-7A.